The primary structure comprises 145 residues: D-aminoacyl-tRNA deacylase (145 aa).

The short motif at 137–138 (GP) is the Gly-cisPro motif, important for rejection of L-amino acids element.

The protein belongs to the DTD family. In terms of assembly, homodimer.

The protein resides in the cytoplasm. The enzyme catalyses glycyl-tRNA(Ala) + H2O = tRNA(Ala) + glycine + H(+). The catalysed reaction is a D-aminoacyl-tRNA + H2O = a tRNA + a D-alpha-amino acid + H(+). An aminoacyl-tRNA editing enzyme that deacylates mischarged D-aminoacyl-tRNAs. Also deacylates mischarged glycyl-tRNA(Ala), protecting cells against glycine mischarging by AlaRS. Acts via tRNA-based rather than protein-based catalysis; rejects L-amino acids rather than detecting D-amino acids in the active site. By recycling D-aminoacyl-tRNA to D-amino acids and free tRNA molecules, this enzyme counteracts the toxicity associated with the formation of D-aminoacyl-tRNA entities in vivo and helps enforce protein L-homochirality. The sequence is that of D-aminoacyl-tRNA deacylase from Lactobacillus delbrueckii subsp. bulgaricus (strain ATCC BAA-365 / Lb-18).